Consider the following 346-residue polypeptide: Biotin synthase (346 aa).

A Radical SAM core domain is found at 38–256 (RQVQVSTLLS…IAIARIMMPT (219 aa)). Positions 53, 57, and 60 each coordinate [4Fe-4S] cluster. [2Fe-2S] cluster-binding residues include Cys-97, Cys-128, Cys-188, and Arg-260.

It belongs to the radical SAM superfamily. Biotin synthase family. As to quaternary structure, homodimer. [4Fe-4S] cluster serves as cofactor. The cofactor is [2Fe-2S] cluster.

It carries out the reaction (4R,5S)-dethiobiotin + (sulfur carrier)-SH + 2 reduced [2Fe-2S]-[ferredoxin] + 2 S-adenosyl-L-methionine = (sulfur carrier)-H + biotin + 2 5'-deoxyadenosine + 2 L-methionine + 2 oxidized [2Fe-2S]-[ferredoxin]. It participates in cofactor biosynthesis; biotin biosynthesis; biotin from 7,8-diaminononanoate: step 2/2. In terms of biological role, catalyzes the conversion of dethiobiotin (DTB) to biotin by the insertion of a sulfur atom into dethiobiotin via a radical-based mechanism. The polypeptide is Biotin synthase (Klebsiella pneumoniae (strain 342)).